Consider the following 62-residue polypeptide: Large ribosomal subunit protein uL29 (62 aa).

It belongs to the universal ribosomal protein uL29 family.

This is Large ribosomal subunit protein uL29 from Desulfosudis oleivorans (strain DSM 6200 / JCM 39069 / Hxd3) (Desulfococcus oleovorans).